A 333-amino-acid chain; its full sequence is Glyceraldehyde-3-phosphate dehydrogenase (333 aa).

S1 is subject to N-acetylserine. NAD(+)-binding positions include 10–11 (RI), D31, and M76. D-glyceraldehyde 3-phosphate-binding positions include 147 to 149 (SCT), T178, 207 to 208 (TG), and R230. Catalysis depends on C148, which acts as the Nucleophile. Residue N312 participates in NAD(+) binding.

Belongs to the glyceraldehyde-3-phosphate dehydrogenase family. As to quaternary structure, homotetramer.

It localises to the cytoplasm. The catalysed reaction is D-glyceraldehyde 3-phosphate + phosphate + NAD(+) = (2R)-3-phospho-glyceroyl phosphate + NADH + H(+). It functions in the pathway carbohydrate degradation; glycolysis; pyruvate from D-glyceraldehyde 3-phosphate: step 1/5. The chain is Glyceraldehyde-3-phosphate dehydrogenase from Panulirus versicolor (Painted spiny lobster).